The sequence spans 574 residues: Septation ring formation regulator EzrA (574 aa).

Residues 1-7 lie on the Extracellular side of the membrane; sequence MSSGIVL. The helical transmembrane segment at 8 to 26 threads the bilayer; that stretch reads LIVAIVLVVIIAYLIAIII. Over 27 to 574 the chain is Cytoplasmic; the sequence is RKRNDSLITK…YEKTRETIRF (548 aa). Coiled coils occupy residues 102–141, 255–368, and 409–495; these read NFIR…EEKN, KNIE…KDVL, and LKNI…EETA.

The protein belongs to the EzrA family.

It is found in the cell membrane. Its function is as follows. Negative regulator of FtsZ ring formation; modulates the frequency and position of FtsZ ring formation. Inhibits FtsZ ring formation at polar sites. Interacts either with FtsZ or with one of its binding partners to promote depolymerization. The sequence is that of Septation ring formation regulator EzrA from Streptococcus mutans serotype c (strain ATCC 700610 / UA159).